Reading from the N-terminus, the 372-residue chain is NAD(P)H-quinone oxidoreductase subunit 1 (372 aa).

Helical transmembrane passes span Pro-31 to Leu-51, Pro-65 to Leu-85, Leu-97 to Leu-117, Val-128 to Met-148, Leu-176 to Val-196, Phe-254 to Tyr-276, Leu-304 to Leu-324, and Phe-347 to Pro-367.

The protein belongs to the complex I subunit 1 family. In terms of assembly, NDH-1 is composed of at least 11 different subunits.

It is found in the cellular thylakoid membrane. The enzyme catalyses a plastoquinone + NADH + (n+1) H(+)(in) = a plastoquinol + NAD(+) + n H(+)(out). The catalysed reaction is a plastoquinone + NADPH + (n+1) H(+)(in) = a plastoquinol + NADP(+) + n H(+)(out). In terms of biological role, NDH-1 shuttles electrons from an unknown electron donor, via FMN and iron-sulfur (Fe-S) centers, to quinones in the respiratory and/or the photosynthetic chain. The immediate electron acceptor for the enzyme in this species is believed to be plastoquinone. Couples the redox reaction to proton translocation, and thus conserves the redox energy in a proton gradient. This is NAD(P)H-quinone oxidoreductase subunit 1 from Leptolyngbya boryana (Plectonema boryanum).